A 533-amino-acid chain; its full sequence is Calcium/calmodulin-dependent protein kinase type II (533 aa).

ATP-binding positions include 18–26 (LGKGAFSVV) and lysine 41. The Proton acceptor role is filled by aspartate 134. Threonine 284 is modified (phosphothreonine; by autocatalysis). Composition is skewed to polar residues over residues 316-345 (TSDSTGSVASNGSTTHDTSQIAGTSSQPTS) and 377-391 (PPSTIKESSESSQTI). Disordered regions lie at residues 316 to 347 (TSDSTGSVASNGSTTHDTSQIAGTSSQPTSPA) and 369 to 400 (LLNKKEQGPPSTIKESSESSQTIDDNDSEKAQ).

The protein belongs to the protein kinase superfamily. CAMK Ser/Thr protein kinase family. CaMK subfamily. In terms of assembly, dodecamer. Subunits are tightly packed around a central ring-shaped scaffold with extensive contacts between the regulatory segment of one kinase and the catalytic domain of another enabling cooperative activation of a subunit by the adjacent molecule. Interacts with and phosphorylates daf-16; the interaction promotes daf-16 nuclear localization. Interacts with egl-2 and tir-1. Interacts with nsy-1. Mg(2+) serves as cofactor.

The protein localises to the cytoplasm. It localises to the cell projection. The protein resides in the axon. It is found in the perikaryon. It catalyses the reaction L-seryl-[protein] + ATP = O-phospho-L-seryl-[protein] + ADP + H(+). The catalysed reaction is L-threonyl-[protein] + ATP = O-phospho-L-threonyl-[protein] + ADP + H(+). Its activity is regulated as follows. Ca(2+)/calmodulin binding removes an autoinhibitory regulatory segment located C-terminal to the kinase domain. This releases the catalytic activity of the enzyme and makes accessible a regulatory residue Thr-284. Phosphorylation of Thr-284 by another kinase domain within the oligomeric holoenzyme keeps CaMKII active in the absence of Ca(2+)/calmodulin by preventing the rebinding of the regulatory segment to the kinase domain and by increasing the affinity of calmodulin for the enzyme. Can respond to high-frequency Ca(2+) pulses to become Ca(2+) independent. In terms of biological role, role in locomotion and neuronal cell fate specification. Required for the regulation of synaptic density, egg laying, defecation, and meiotic maturation. Required for viability under chronic osmotic stress in which it acts downstream of osr-1. Regulates the synaptic trafficking of glr-1. Bidirectional modulator of neurotransmitter release with negative modulatory effects mainly mediated via slo-1 activation. May suppress the functional response to an internal pacemaker, perhaps by modulating the activity of the IP3 receptor. The sequence is that of Calcium/calmodulin-dependent protein kinase type II from Caenorhabditis briggsae.